The following is a 101-amino-acid chain: uncharacterized protein (101 aa).

2 helical membrane passes run 3-23 (IIGSAFLGIVFCILLAFAIIF) and 68-88 (VIVLTIICFLIFITPIIIIVI).

The protein localises to the cell membrane. This is an uncharacterized protein from Ureaplasma parvum serovar 3 (strain ATCC 700970).